A 291-amino-acid chain; its full sequence is MSVEIPQQDVMIVTGMSGAGRSTVGNALEDLGWYVVDNLPPQMLKPLVELAGRAGTSLPKIAAVVDVRGGDFFSELRDILQTFGTGPRLRVLFLEATDAALVRRFEQVRRPHPLQGNGTLLDGIAAERARMIEIREASDLVIDTSELNIHQLATTITEQFSGADDAGVRVTVMSFGFKYGTPADADMVADMRFLPNPFWTPELRPLTGRDKAVSDYVLGQEGAEEFVHAYARALAPVLAGYQRENKRHATIAIGCTGGKHRSVAVSEELSSLLRALPGVAVSTKHRDLGRE.

15 to 22 (GMSGAGRS) serves as a coordination point for ATP. 66–69 (DVRG) provides a ligand contact to GTP.

The protein belongs to the RapZ-like family.

Functionally, displays ATPase and GTPase activities. In Clavibacter michiganensis subsp. michiganensis (strain NCPPB 382), this protein is Nucleotide-binding protein CMM_1747.